A 131-amino-acid chain; its full sequence is MATIPSVVREITLVGEQIFDHTQVVRAEIDRFVERFERNERHREFDGILRASHALVESSETPVEGLFDMGKMEHMTQCVDDITKKLQTLVEPKYQKEHDVYLEKVKEDQKKYVDVCREQAMNKMRSMTAHR.

The protein belongs to the BLOC1S5 family. In terms of assembly, component of the biogenesis of lysosome-related organelles complex-1 (BLOC-1) composed at least of blos-1, blos-2, blos-4, dsbn-1, glo-2, mutd-1 and snpn-1.

Component of the biogenesis of lysosome-related organelles complex-1 (BLOC-1) involved in gut granule biogenesis. In Caenorhabditis elegans, this protein is Biogenesis of lysosome-related organelles complex 1 subunit 5 (mutd-1).